The chain runs to 170 residues: MDLKQYVTIVPDFPKPGIMFKDITTLMDKGEVYKYATDQIVEYAREKKIDIVVGPEARGFIIGCPVAYALGVGFAPVRKEGKLPREVVRVEYGLEYGKDVLTMHKDAIKPGQRVLITDDLLATGGTIRATIQLVEQLGGVVAGIAFLIELTELEGRKKLEGYDILALMQF.

The protein belongs to the purine/pyrimidine phosphoribosyltransferase family. As to quaternary structure, homodimer.

The protein localises to the cytoplasm. It catalyses the reaction AMP + diphosphate = 5-phospho-alpha-D-ribose 1-diphosphate + adenine. It functions in the pathway purine metabolism; AMP biosynthesis via salvage pathway; AMP from adenine: step 1/1. Catalyzes a salvage reaction resulting in the formation of AMP, that is energically less costly than de novo synthesis. This Geobacillus sp. (strain WCH70) protein is Adenine phosphoribosyltransferase.